Consider the following 545-residue polypeptide: Tripartite motif-containing 55 (545 aa).

The RING-type zinc-finger motif lies at 26–82; it reads CPICLEMFTKPVVILPCQHNLCRKCASDIFQASNPYLPTRGGTTVASGGRFRCPSCR. The B box-type zinc-finger motif lies at 119 to 161; it reads LDQPMCEEHEEERINIYCLNCEVPTCSLCKVFGAHKDCQVAPL. Zn(2+)-binding residues include C124, H127, C147, and H153. The region spanning 269–327 is the COS domain; the sequence is MDEPEMAVFLQNAKTLLQKIVEASKAFQMEKLEQGYEIMSNFTVNLNREEKIIREIDFS. Disordered regions lie at residues 324–352, 359–378, and 417–532; these read IDFS…VEVE, IASS…SQLP, and SQQT…EPAR. Positions 328–352 are enriched in acidic residues; that stretch reads REEEEEEDAGEIDEEGEGEDAVEVE. Residues 417–428 show a composition bias toward polar residues; the sequence is SQQTTQSETSGP. Over residues 474–485 the composition is skewed to low complexity; it reads SSVQSAEVAEAA. Over residues 486-506 the composition is skewed to polar residues; the sequence is TNEQAAVSGKESSSTAATSQI.

Post-translationally, targeted for degradation through the proteasomal and lysosomal pathways in the presence of SUMO3. As to expression, widely expressed in various tissues, besides skeletal muscle and heart, such as brain, lung, liver, spleen and kidney.

The protein resides in the nucleus. It is found in the cytoplasm. It carries out the reaction S-ubiquitinyl-[E2 ubiquitin-conjugating enzyme]-L-cysteine + [acceptor protein]-L-lysine = [E2 ubiquitin-conjugating enzyme]-L-cysteine + N(6)-ubiquitinyl-[acceptor protein]-L-lysine.. E3 ubiquitin ligase that plays an important role in regulating cardiac development and contractility, muscle growth, metabolism, and fiber-type differentiation. Acts as a critical factor that regulates cardiomyocyte size during development in concert with TRIM63 by regulating E2F1-mediated gene expression. Plays a role in apoptosis induction in cardiomyocytes by promoting ubiquitination of the DUSP1 phosphatase. Promotes non-canonical NF-kappa-B signaling and B-cell-mediated immune responses by mediating NFKB2 'Lys-48'-linked ubiquitination and processing. In turn, NFKB2 is further processed by valosin-containing protein/VCP, an ATPase that mediates ubiquitin-dependent protein degradation by the proteasome. May play a role in preventing macrophages from producing inflammatory factors and migrating by downregulating the level of nuclear NF-kappa-B subunit RELA. Modifies also PPARG via polyubiquitination and accelerates PPARG proteasomal degradation to inhibit its activity. The polypeptide is Tripartite motif-containing 55 (Trim55) (Mus musculus (Mouse)).